A 68-amino-acid polypeptide reads, in one-letter code: Tau-scoloptoxin(04)-Ssm1b (68 aa).

Positions 1-25 (MLKSFCILSVFMVLFLAKFPDLCSG) are cleaved as a signal peptide. Residues 26-36 (EEISPLKIVVR) constitute a propeptide that is removed on maturation. 2 disulfides stabilise this stretch: C45–C56 and C50–C63. The highly charged C-terminal region, binds to TRPV1 channel stretch occupies residues 55–67 (RCSIVDKQCIKKE).

Belongs to the scoloptoxin-04 family. Expressed by the venom gland.

Its subcellular location is the secreted. Functionally, extremely potent agonist and potentiator of TRPV1 (EC(50)=470-521.5 nM (mouse)). It strongly promotes the heat activation process by downshifting the activation threshold temperature. It preferably binds to the activated channel and promotes its opening. Holding the channel closed by cooling prevents binding of this toxin, leaving it ineffective. The toxin binds to the charge-rich outer pore region of the channel where it directly interacts with the pore helix and turret, two adjacent structural elements known to be critical for activation gating of TRPV1. In comparison with Sm1b, induces a TRPV1 desensitization with slower kinetics (20 seconds). In vivo, induces pain in mice after intraplantar injection. Its function is as follows. Potent agonist and probable potentiator of TRPV1 (EC(50)=38.35 uM (mouse)). Also binds to the outer pore region of TRPV1. In comparison with Sm1a, induces a TRPV1 desensitization with faster kinetics (2 seconds) and leads to a more complete TRPV1 desensitization. Desensitization is achieved by reducing both the open probability and the single-channel conductance upon prolonged exposure. The protein is Tau-scoloptoxin(04)-Ssm1b of Scolopendra mutilans (Chinese red-headed centipede).